The primary structure comprises 443 residues: UDP-N-acetylmuramate--L-alanine ligase (443 aa).

110-116 (GAHGKTS) serves as a coordination point for ATP.

This sequence belongs to the MurCDEF family.

Its subcellular location is the cytoplasm. The catalysed reaction is UDP-N-acetyl-alpha-D-muramate + L-alanine + ATP = UDP-N-acetyl-alpha-D-muramoyl-L-alanine + ADP + phosphate + H(+). It functions in the pathway cell wall biogenesis; peptidoglycan biosynthesis. Its function is as follows. Cell wall formation. This is UDP-N-acetylmuramate--L-alanine ligase from Lactococcus lactis subsp. cremoris (strain SK11).